A 219-amino-acid chain; its full sequence is Interleukin-12 subunit alpha (219 aa).

The signal sequence occupies residues 1–22; the sequence is MCPARSLLLVATLVLLDHLSLA. Disulfide bonds link Cys-37/Cys-110, Cys-64/Cys-196, and Cys-85/Cys-123. N-linked (GlcNAc...) asparagine glycosylation is found at Asn-93 and Asn-107.

Belongs to the IL-6 superfamily. In terms of assembly, heterodimer with IL12B; disulfide-linked. This heterodimer is known as interleukin IL-12. Heterodimer with EBI3/IL27B; not disulfide-linked. This heterodimer is known as interleukin IL-35. Interacts with NBR1; this interaction promotes IL-12 secretion.

It localises to the secreted. Its function is as follows. Heterodimerizes with IL12B to form the IL-12 cytokine or with EBI3/IL27B to form the IL-35 cytokine. IL-12 is primarily produced by professional antigen-presenting cells (APCs) such as B-cells and dendritic cells (DCs) as well as macrophages and granulocytes and regulates T-cell and natural killer-cell responses, induces the production of interferon-gamma (IFN-gamma), favors the differentiation of T-helper 1 (Th1) cells and is an important link between innate resistance and adaptive immunity. Mechanistically, exerts its biological effects through a receptor composed of IL12R1 and IL12R2 subunits. Binding to the receptor results in the rapid tyrosine phosphorylation of a number of cellular substrates including the JAK family kinases TYK2 and JAK2. In turn, recruited STAT4 gets phosphorylated and translocates to the nucleus where it regulates cytokine/growth factor responsive genes. As part of IL-35, plays essential roles in maintaining the immune homeostasis of the liver microenvironment and also functions as an immune-suppressive cytokine. Mediates biological events through unconventional receptors composed of IL12RB2 and gp130/IL6ST heterodimers or homodimers. Signaling requires the transcription factors STAT1 and STAT4, which form a unique heterodimer that binds to distinct DNA sites. In Homo sapiens (Human), this protein is Interleukin-12 subunit alpha (IL12A).